Consider the following 218-residue polypeptide: Large ribosomal subunit protein bL25 (218 aa).

The protein belongs to the bacterial ribosomal protein bL25 family. CTC subfamily. In terms of assembly, part of the 50S ribosomal subunit; part of the 5S rRNA/L5/L18/L25 subcomplex. Contacts the 5S rRNA. Binds to the 5S rRNA independently of L5 and L18.

Its function is as follows. This is one of the proteins that binds to the 5S RNA in the ribosome where it forms part of the central protuberance. This chain is Large ribosomal subunit protein bL25, found in Gluconobacter oxydans (strain 621H) (Gluconobacter suboxydans).